A 418-amino-acid chain; its full sequence is MGEDAAQAEKFQHPNTDMLQEKPSSPSPMPSSTPSPSLNLGSTEEAIRDNSQVNAVTVHTLLDKLVNMLDAVRENQHNMEQRQINLEGSVKGIQNDLTKLSKYQASTSNTVSKLLEKSRKVSAHTRAVRERLERQCVQVKRLENNHAQLLRRNHFKVLIFQEESEIPASVFVKEPVPSAAEGKEELADENKSLEETLHNVDLSSDDELPRDEEALEDSAEEKMEESRAEKIKRSSLKKVDSLKKAFSRQNIEKKMNKLGTKIVSVERREKIKKSLTPNHQKASSGKSSPFKVSPLSFGRKKVREGESSVENETKLEDQMQEDREEGSFTEGLSEASLPSGLMEGSAEDAEKSARRGNNSAVGSNADLTIEEDEEEEPVALQQAQQVRYESGYMLNSEEMEEPSEKQVQPAVLHVDQTA.

Positions 1–42 are disordered; that stretch reads MGEDAAQAEKFQHPNTDMLQEKPSSPSPMPSSTPSPSLNLGS. G2 is modified (N-acetylglycine). The segment at 2-168 is interaction with CAVIN1; the sequence is GEDAAQAEKF…IFQEESEIPA (167 aa). Residues S27, S35, S37, and S51 each carry the phosphoserine modification. 2 coiled-coil regions span residues 61-87 and 126-268; these read LLDK…INLE and RAVR…VERR. A leucine-zipper region spans residues 62–100; the sequence is LDKLVNMLDAVRENQHNMEQRQINLEGSVKGIQNDLTKL. The residue at position 196 (T196) is a Phosphothreonine. 2 disordered regions span residues 200-238 and 262-382; these read VDLS…SLKK and IVSV…ALQQ. A phosphoserine mark is found at S203, S204, and S218. Acidic residues predominate over residues 203-219; sequence SSDDELPRDEEALEDSA. Residues 220-238 are compositionally biased toward basic and acidic residues; it reads EEKMEESRAEKIKRSSLKK. Over residues 275–287 the composition is skewed to polar residues; that stretch reads LTPNHQKASSGKS. 6 positions are modified to phosphoserine: S283, S284, S287, S288, S293, and S296. Residues 303–321 are compositionally biased toward basic and acidic residues; the sequence is REGESSVENETKLEDQMQE. Phosphoserine is present on residues S327, S336, S359, and S363. Polar residues predominate over residues 355-366; the sequence is RGNNSAVGSNAD. T368 bears the Phosphothreonine mark. Acidic residues predominate over residues 368-377; sequence TIEEDEEEEP. Y388 carries the phosphotyrosine modification. Phosphoserine is present on residues S390 and S396. Positions 396–418 are disordered; that stretch reads SEEMEEPSEKQVQPAVLHVDQTA.

Belongs to the CAVIN family. As to quaternary structure, component of the CAVIN complex composed of CAVIN1, CAVIN2, CAVIN3 and CAVIN4. Binds to PRKCA in the presence of phosphatidylserine. Interacts with CAVIN4; this augments the transactivation of NPPA by CAVIN4. Interacts with CAVIN1. Interacts with CAV3. In terms of processing, the N-terminus is blocked. In terms of tissue distribution, heart, adipose tissue, lung and endothelial cells (at protein level). Highly expressed in kidney and expressed at lower levels in liver, spleen, thymus, stomach, intestine and uterus.

The protein localises to the cytoplasm. Its subcellular location is the cytosol. It localises to the membrane. The protein resides in the caveola. In terms of biological role, plays an important role in caveolar biogenesis and morphology. Regulates caveolae morphology by inducing membrane curvature within caveolae. Plays a role in caveola formation in a tissue-specific manner. Required for the formation of caveolae in the lung and fat endothelia but not in the heart endothelia. Negatively regulates the size or stability of CAVIN complexes in the lung endothelial cells. May play a role in targeting PRKCA to caveolae. This is Caveolae-associated protein 2 (Cavin2) from Mus musculus (Mouse).